Consider the following 172-residue polypeptide: uncharacterized protein (172 aa).

The HotDog ACOT-type domain occupies Lys10–Asn122. The tract at residues Arg148 to Trp172 is disordered.

It belongs to the acyl coenzyme A hydrolase family.

This is an uncharacterized protein from Bacillus subtilis (strain 168).